The primary structure comprises 213 residues: Cysteine dioxygenase (213 aa).

Fe cation-binding residues include H100, H102, and H160. Residues 107-177 (CVMKVLKGSL…TNFAISLHLY (71 aa)) constitute a cross-link (3'-(S-cysteinyl)-tyrosine (Cys-Tyr)).

The protein belongs to the cysteine dioxygenase family. Fe cation is required as a cofactor. The thioether cross-link between Cys-107 and Tyr-177 plays a structural role through stabilizing the Fe(2+) ion, and prevents the production of highly damaging free hydroxyl radicals by holding the oxygen radical via hydroxyl hydrogen.

It carries out the reaction L-cysteine + O2 = 3-sulfino-L-alanine + H(+). This chain is Cysteine dioxygenase (CDO1), found in Ajellomyces capsulatus (strain G186AR / H82 / ATCC MYA-2454 / RMSCC 2432) (Darling's disease fungus).